Consider the following 173-residue polypeptide: MPRTQRNDNFIDKSFTVMADIILKILPTNQKAKEAFVYYRDGMSAQADGEYAEALDNYEEALRLEENPNDRSYILYNMALIHASNGDHEKALGLYQEAIELNPKMPSALNNIAVIYHFQGEKAKEAGQEDDAENLFDKAAEYWKQAIRLAPNNYIEAQNWLKITGRSEMDVFF.

3 TPR repeats span residues 35–68 (AFVY…EENP), 72–105 (SYIL…NPKM), and 120–153 (GEKA…APNN).

The protein belongs to the Ycf3 family.

It is found in the cellular thylakoid membrane. Functionally, essential for the assembly of the photosystem I (PSI) complex. May act as a chaperone-like factor to guide the assembly of the PSI subunits. In Synechocystis sp. (strain ATCC 27184 / PCC 6803 / Kazusa), this protein is Photosystem I assembly protein Ycf3.